The chain runs to 296 residues: Uridine phosphorylase A (296 aa).

Phosphate-binding positions include Gly46, Arg77, and 121–124 (RLGT). Uridine is bound by residues 125–126 (SG) and 201–203 (QGR).

The protein belongs to the PNP/UDP phosphorylase family. Homodimer.

The enzyme catalyses uridine + phosphate = alpha-D-ribose 1-phosphate + uracil. Its pathway is pyrimidine metabolism; UMP biosynthesis via salvage pathway; uracil from uridine (phosphorylase route): step 1/1. In terms of biological role, catalyzes the reversible phosphorylytic cleavage of uridine and deoxyuridine to uracil and ribose- or deoxyribose-1-phosphate. The produced molecules are then utilized as carbon and energy sources or in the rescue of pyrimidine bases for nucleotide synthesis. The protein is Uridine phosphorylase A of Schistosoma mansoni (Blood fluke).